A 226-amino-acid chain; its full sequence is Lysoplasmalogenase TMEM86B (226 aa).

Residues 1–23 (MDAGKAGQTLKTHCSAQRPDVCR) are Cytoplasmic-facing. Residues 24–40 (WLSPFILSCCVYFCLWI) traverse the membrane as a helical segment. Residues 41–46 (PEDQLS) lie on the Extracellular side of the membrane. Residues 47 to 67 (WFAALVKCLPVLCLAGFLWVM) form a helical membrane-spanning segment. The Cytoplasmic segment spans residues 68-75 (SPSGGYTQ). Residues 76–93 (LLQGALVCSAVGDACLIW) form a helical membrane-spanning segment. Topologically, residues 94 to 100 (PAAFVPG) are extracellular. The helical transmembrane segment at 101–117 (MAAFATAHLLYVWAFGF) threads the bilayer. The Cytoplasmic portion of the chain corresponds to 118-123 (SPLQPG). Residues 124-140 (LLLLIILAPGPYLSLVL) traverse the membrane as a helical segment. Residues 141–146 (QHLEPD) lie on the Extracellular side of the membrane. The helical transmembrane segment at 147–163 (MVLPVAAYGLILMAMLW) threads the bilayer. Residues 164–171 (RGLAQGGS) lie on the Cytoplasmic side of the membrane. Residues 172 to 188 (AGWGALLFTLSDGVLAW) form a helical membrane-spanning segment. At 189 to 199 (DTFAQPLPHAH) the chain is on the extracellular side. A helical transmembrane segment spans residues 200-218 (LVIMTTYYAAQLLITLSAL). The Cytoplasmic portion of the chain corresponds to 219–226 (RSPVPKTD).

The protein belongs to the TMEM86 family. In terms of assembly, homodimer.

It localises to the endoplasmic reticulum membrane. The protein localises to the cytoplasm. The enzyme catalyses a 1-O-(1Z-alkenyl)-sn-glycero-3-phosphocholine + H2O = a 2,3-saturated aldehyde + sn-glycerol 3-phosphocholine. It carries out the reaction a 1-O-(1Z-alkenyl)-sn-glycero-3-phosphoethanolamine + H2O = a 2,3-saturated aldehyde + sn-glycero-3-phosphoethanolamine. With respect to regulation, competitively inhibited by lysophosphatidic acid. Functionally, catalyzes the hydrolysis of the vinyl ether bond of choline or ethanolamine lysoplasmalogens, forming fatty aldehyde and glycerophosphocholine or glycerophosphoethanolamine, respectively and is specific for the sn-2-deacylated (lyso) form of plasmalogen. In Homo sapiens (Human), this protein is Lysoplasmalogenase TMEM86B (TMEM86B).